We begin with the raw amino-acid sequence, 921 residues long: Protein translocase subunit SecA (921 aa).

ATP contacts are provided by residues Gln85, 103–107, and Asp514; that span reads GEGKT. The Zn(2+) site is built by Cys905, Cys907, Cys916, and His917.

This sequence belongs to the SecA family. In terms of assembly, monomer and homodimer. Part of the essential Sec protein translocation apparatus which comprises SecA, SecYEG and auxiliary proteins SecDF-YajC and YidC. It depends on Zn(2+) as a cofactor.

The protein resides in the cell inner membrane. It is found in the cytoplasm. It carries out the reaction ATP + H2O + cellular proteinSide 1 = ADP + phosphate + cellular proteinSide 2.. In terms of biological role, part of the Sec protein translocase complex. Interacts with the SecYEG preprotein conducting channel. Has a central role in coupling the hydrolysis of ATP to the transfer of proteins into and across the cell membrane, serving both as a receptor for the preprotein-SecB complex and as an ATP-driven molecular motor driving the stepwise translocation of polypeptide chains across the membrane. The polypeptide is Protein translocase subunit SecA (Herminiimonas arsenicoxydans).